Here is a 428-residue protein sequence, read N- to C-terminus: MTVLAQGCDVAPPNNLTKPVRHESGQREVFCGLTGIVWLHRKIQDAFFLVVGSRTCAHLIQSAAGVMIFAEPRFATAIMEEKDLAGLTDANTELDRIVTQLLTRRPDIKLLFLVGSCPSEVIKLDLSRAALRLSQTFSPGVRILSYSGSGIETTFTQGEDACLASLVPELPAASGKDASLLVVGSMADVVEDQFVRMFEALGIGPVQFLPPRNSATLPSVGPNTKFLLAQPFLADTARELENRGATRLRAPFPLGVEGTTAWLRAAANAFAIDPALFDKVTQPARARAERALDNYRKELAGRRIFLFPDSQLEIPLARFLSRELGMQLVEVGTPYLHREHLAEELKLLPPDVQITEGQDVDLQLDRCRLARPDLVVCGLGLANPLEAEGMTTKWAIELVFTPIQGYEQASDLAELFARPLVRRAKLVA.

Residues Cys31, Cys56, and Cys117 each coordinate [4Fe-4S] cluster.

This sequence belongs to the BchN/ChlN family. As to quaternary structure, protochlorophyllide reductase is composed of three subunits; BchL, BchN and BchB. Forms a heterotetramer of two BchB and two BchN subunits. [4Fe-4S] cluster serves as cofactor.

The catalysed reaction is chlorophyllide a + oxidized 2[4Fe-4S]-[ferredoxin] + 2 ADP + 2 phosphate = protochlorophyllide a + reduced 2[4Fe-4S]-[ferredoxin] + 2 ATP + 2 H2O. It participates in porphyrin-containing compound metabolism; bacteriochlorophyll biosynthesis (light-independent). Component of the dark-operative protochlorophyllide reductase (DPOR) that uses Mg-ATP and reduced ferredoxin to reduce ring D of protochlorophyllide (Pchlide) to form chlorophyllide a (Chlide). This reaction is light-independent. The NB-protein (BchN-BchB) is the catalytic component of the complex. The polypeptide is Light-independent protochlorophyllide reductase subunit N (Rhodopseudomonas palustris (strain BisB18)).